A 311-amino-acid chain; its full sequence is tRNA dimethylallyltransferase (311 aa).

11–18 (GPTAVGKT) is a binding site for ATP. 13–18 (TAVGKT) serves as a coordination point for substrate. Residues 36 to 39 (DSMQ) are interaction with substrate tRNA.

Belongs to the IPP transferase family. In terms of assembly, monomer. The cofactor is Mg(2+).

It carries out the reaction adenosine(37) in tRNA + dimethylallyl diphosphate = N(6)-dimethylallyladenosine(37) in tRNA + diphosphate. Functionally, catalyzes the transfer of a dimethylallyl group onto the adenine at position 37 in tRNAs that read codons beginning with uridine, leading to the formation of N6-(dimethylallyl)adenosine (i(6)A). In Clostridioides difficile (strain 630) (Peptoclostridium difficile), this protein is tRNA dimethylallyltransferase.